Consider the following 205-residue polypeptide: Large ribosomal subunit protein uL3c (205 aa).

Residues 130–150 (RGPMSHGSKNHRQPGSIGAGT) form a disordered region.

It belongs to the universal ribosomal protein uL3 family. In terms of assembly, part of the 50S ribosomal subunit.

It localises to the plastid. The protein localises to the chloroplast. In terms of biological role, one of the primary rRNA binding proteins, it binds directly near the 3'-end of the 23S rRNA, where it nucleates assembly of the 50S subunit. This chain is Large ribosomal subunit protein uL3c (rpl3), found in Gracilaria tenuistipitata var. liui (Red alga).